The following is a 254-amino-acid chain: Putative ankyrin-containing lipoprotein Lxx09580 (254 aa).

Residues 1 to 22 (MTEIRYVRLLTLVLASSVLLAG) form the signal peptide. Cysteine 23 carries the N-palmitoyl cysteine lipid modification. Cysteine 23 is lipidated: S-diacylglycerol cysteine. ANK repeat units lie at residues 56–85 (AATA…AIED), 89–118 (GGRT…DVNA), 122–151 (IQDS…DVNA), 155–184 (FNGT…DLDH), and 188–222 (PGWT…NPDI).

It is found in the cell membrane. The polypeptide is Putative ankyrin-containing lipoprotein Lxx09580 (Leifsonia xyli subsp. xyli (strain CTCB07)).